Here is a 2019-residue protein sequence, read N- to C-terminus: Sodium channel protein type 5 subunit alpha (2019 aa).

Residues 1-129 (MANFLLPRGT…VRRAAVKILV (129 aa)) are Cytoplasmic-facing. The tract at residues 27-66 (RMAEKQARGSATSQESREGLPEEEAPRPQLDLQASKKLPD) is disordered. A Phosphoserine modification is found at serine 36. A Phosphothreonine modification is found at threonine 38. Residues 41 to 52 (ESREGLPEEEAP) show a composition bias toward basic and acidic residues. One copy of the I repeat lies at 113 to 420 (VLSPFHPVRR…VVAMAYEEQN (308 aa)). Residues 130–149 (HSLFSMLIMCTILTNCVFMA) traverse the membrane as a helical segment. The Extracellular portion of the chain corresponds to 150 to 157 (QHDPPPWT). A helical transmembrane segment spans residues 158–179 (KYVEYTFTAIYTFESLVKILAR). The Cytoplasmic portion of the chain corresponds to 180 to 188 (GFCLHAFTF). Residues 189 to 209 (LRDPWNWLDFSVIVMAYTTEF) traverse the membrane as a helical segment. Over 210–216 (VDLGNVS) the chain is Extracellular. N-linked (GlcNAc...) asparagine glycosylation is present at asparagine 214. Residues 217 to 236 (ALRTFRVLRALKTISVISGL) form a helical membrane-spanning segment. Topologically, residues 237–249 (KTIVGALIQSVKK) are cytoplasmic. Residues 250–272 (LADVMVLTVFCLSVFALIGLQLF) traverse the membrane as a helical segment. At 273 to 357 (MGNLRHKCVR…PDHGYTSFDS (85 aa)) the chain is on the extracellular side. Cysteine 280 and cysteine 335 are oxidised to a cystine. Residues asparagine 283, asparagine 288, asparagine 291, asparagine 318, and asparagine 328 are each glycosylated (N-linked (GlcNAc...) asparagine). The pore-forming intramembrane region spans 358–378 (FAWAFLALFRLMTQDCWERLY). Residues 379–386 (QQTLRSAG) are Extracellular-facing. Residues 387-413 (KIYMIFFMLVIFLGSFYLVNLILAVVA) form a helical membrane-spanning segment. Topologically, residues 414 to 719 (MAYEEQNQAT…VKFVVMDPFA (306 aa)) are cytoplasmic. A phosphoserine mark is found at serine 457, serine 460, serine 483, and serine 484. Disordered regions lie at residues 461-575 (LEMS…TQGQ) and 610-647 (EATS…TPQA). Threonine 486 is subject to Phosphothreonine. Basic and acidic residues predominate over residues 491–503 (DDRLPKSDSEDGP). Phosphoserine is present on residues serine 497 and serine 510. Positions 507–528 (NQLSLTHGLSRTSMRPRSSRGS) are enriched in polar residues. Arginine 526 is modified (dimethylated arginine; alternate). Arginine 526 is modified (omega-N-methylarginine; alternate). Serine 539 and serine 571 each carry phosphoserine. A phosphoserine mark is found at serine 664 and serine 667. Residues 699-971 (CCPLWMSIKQ…QLALARIQRG (273 aa)) form an II repeat. A helical membrane pass occupies residues 720-737 (DLTITMCIVLNTLFMALE). Residues 738–746 (HYNMTAEFE) are Extracellular-facing. Asparagine 740 carries an N-linked (GlcNAc...) asparagine glycan. A helical membrane pass occupies residues 747-769 (EMLQVGNLVFTGIFTAEMTFKII). Topologically, residues 770-775 (ALDPYY) are cytoplasmic. The chain crosses the membrane as a helical span at residues 776–796 (YFQQGWNIFDSIIVILSLMEL). The Extracellular portion of the chain corresponds to 797–806 (GLSRMGNLSV). An N-linked (GlcNAc...) asparagine glycan is attached at asparagine 803. A helical transmembrane segment spans residues 807-821 (LRSFRLLRVFKLAKS). Topologically, residues 822–838 (WPTLNTLIKIIGNSVGA) are cytoplasmic. Residues 839–860 (LGNLTLVLAIIVFIFAVVGMQL) traverse the membrane as a helical segment. Over 861-886 (FGKNYSELRHRISDSGLLPRWHMMDF) the chain is Extracellular. Residue asparagine 864 is glycosylated (N-linked (GlcNAc...) asparagine). Residues 887-905 (FHAFLIIFRILCGEWIETM) constitute an intramembrane region (pore-forming). Over 906–914 (WDCMEVSGQ) the chain is Extracellular. A disulfide bridge connects residues cysteine 908 and cysteine 917. A helical membrane pass occupies residues 915 to 943 (SLCLLVFLLVMVIGNLVVLNLFLALLLSS). At 944–1205 (FSADNLTAPD…LRKTCYRIVE (262 aa)) the chain is on the cytoplasmic side. Residues 1000–1144 (HSQLPSCIAA…EDSYSEGSTA (145 aa)) form a disordered region. Over residues 1017-1036 (EVEKAPPARKETRFEEDKRP) the composition is skewed to basic and acidic residues. A compositionally biased stretch (acidic residues) spans 1056-1075 (SDTDDQEEDEENSLGTEEEE). Positions 1098 to 1115 (SQVSETTSSEAEASTSQA) are enriched in low complexity. Residues 1189–1503 (PGKVWWRLRK…KKYYNAMKKL (315 aa)) form an III repeat. A helical membrane pass occupies residues 1206–1227 (HSWFETFIIFMILLSSGALAFE). Residues 1228 to 1238 (DIYLEERKTIK) lie on the Extracellular side of the membrane. Residues 1239 to 1261 (VLLEYADKMFTYVFVLEMLLKWV) form a helical membrane-spanning segment. Residues 1262–1270 (AYGFKKYFT) are Cytoplasmic-facing. A helical membrane pass occupies residues 1271–1293 (NAWCWLDFLIVDVSLVSLVANTL). Topologically, residues 1294 to 1299 (GFAEMG) are extracellular. Residues 1300 to 1319 (PIKSLRTLRALRPLRALSRF) traverse the membrane as a helical segment. At 1320 to 1332 (EGMRVVVNALVGA) the chain is on the cytoplasmic side. The helical transmembrane segment at 1333-1357 (IPSIMNVLLVCLIFWLIFSIMGVNL) threads the bilayer. The Extracellular segment spans residues 1358–1402 (FAGKFGRCINQTEGDLPLNYTIVNNKSECESFNVTGELYWTKVKV). N-linked (GlcNAc...) asparagine glycans are attached at residues asparagine 1367, asparagine 1376, asparagine 1382, and asparagine 1390. Residues 1403–1424 (NFDNVGAGYLALLQVATFKGWM) constitute an intramembrane region (pore-forming). Topologically, residues 1425 to 1447 (DIMYAAVDSRGYEEQPQWEDNLY) are extracellular. A helical membrane pass occupies residues 1448–1472 (MYIYFVVFIIFGSFFTLNLFIGVII). The Cytoplasmic segment spans residues 1473–1530 (DNFNQQKKKLGGQDIFMTEEQKKYYNAMKKLGSKKPQKPIPRPLNKYQGFIFDIVTKQ). Residue serine 1505 is modified to Phosphoserine; by PKC. One copy of the IV repeat lies at 1512 to 1809 (IPRPLNKYQG…WEKFDPEATQ (298 aa)). Residues 1531–1549 (AFDVTIMFLICLNMVTMMV) traverse the membrane as a helical segment. The Extracellular portion of the chain corresponds to 1550–1560 (ETDDQSPEKVN). Residues 1561–1582 (ILAKINLLFVAIFTGECIVKMA) form a helical membrane-spanning segment. Residues 1583–1591 (ALRHYYFTN) lie on the Cytoplasmic side of the membrane. A helical transmembrane segment spans residues 1592-1614 (SWNIFDFVVVILSIVGTVLSDII). Residues 1615-1621 (QKYFFSP) lie on the Extracellular side of the membrane. The chain crosses the membrane as a helical span at residues 1622–1642 (TLFRVIRLARIGRILRLIRGA). Residues 1643–1652 (KGIRTLLFAL) are Cytoplasmic-facing. Residues 1653 to 1681 (MMSLPALFNIGLLLFLVMFIYSIFGMANF) form a helical membrane-spanning segment. At 1682-1699 (AYVKWEAGIDDMFNFQTF) the chain is on the extracellular side. Residues 1700-1716 (ANSMLCLFQITTSAGWD) constitute an intramembrane region (pore-forming). Residues 1717 to 1747 (GLLSPILNTGPPYCDPNLPNSNGSRGNCGSP) are Extracellular-facing. A helical membrane pass occupies residues 1748–1773 (AVGILFFTTYIIISFLIVVNMYIAII). The Cytoplasmic segment spans residues 1774–2019 (LENFSVATEE…SPDRDRESIV (246 aa)). An interaction with FGF13 region spans residues 1841 to 1903 (DLPMVSGDRI…ITTTLRRKHE (63 aa)). An IQ domain is found at 1903-1932 (EEVSATVIQRAFRRHLLQRSVKHASFLFRQ). The segment covering 1963-1982 (SGPLSSSSISSTSFPPSYDS) has biased composition (low complexity). A disordered region spans residues 1963–2019 (SGPLSSSSISSTSFPPSYDSVTRATSDNLPVRASDYSRSEDLADFPPSPDRDRESIV). The segment at 1977 to 1980 (PPSY) is interaction with NEDD4, NEDD4L and WWP2.

Belongs to the sodium channel (TC 1.A.1.10) family. Nav1.5/SCN5A subfamily. As to quaternary structure, cannot form the same regulatory interactions with beta subunits as other Navs do. Interacts with the PDZ domain of the syntrophin SNTA1, SNTB1 and SNTB2. Interacts with NEDD4, NEDD4L, WWP2 and GPD1L. Interacts with CALM. Interacts with FGF13; the interaction is direct and may regulate SNC5A density at membranes and function. Interacts with FGF12 and FGF14. Interacts with ANK3. Interacts with PKP2 (via N-terminus). Interacts with TMEM233. Interacts with XIRP2; the interaction is required for normal action potential configuration in the heart. In terms of processing, phosphorylation at Ser-1505 by PKC in a highly conserved cytoplasmic loop slows inactivation of the sodium channel and reduces peak sodium currents. Regulated through phosphorylation by CaMK2D. Post-translationally, ubiquitinated by NEDD4L; which promotes its endocytosis. Does not seem to be ubiquitinated by NEDD4 or WWP2. Lacks the cysteine which covalently binds the conotoxin GVIIJ. This cysteine (position 868) is speculated in other sodium channel subunits alpha to be implied in covalent binding with the sodium channel subunit beta-2 or beta-4. In terms of processing, N-glycosylated at Asn-318, probably hinders potential interaction with regulatory subunits. As to expression, expressed in the myocardium (at protein level).

The protein localises to the cell membrane. Its subcellular location is the cytoplasm. It localises to the perinuclear region. It is found in the sarcolemma. The protein resides in the T-tubule. The protein localises to the cell junction. It carries out the reaction Na(+)(in) = Na(+)(out). With respect to regulation, channel inactivation is regulated by intracellular calcium levels. It is a tetrodotoxin-resistant voltage-gated Na(+) channel (Nav). Functionally, pore-forming subunit of Nav1.5, a voltage-gated sodium (Nav) channel that directly mediates the depolarizing phase of action potentials in excitable membranes. Navs, also called VGSCs (voltage-gated sodium channels) or VDSCs (voltage-dependent sodium channels), operate by switching between closed and open conformations depending on the voltage difference across the membrane. In the open conformation they allow Na(+) ions to selectively pass through the pore, along their electrochemical gradient. The influx of Na(+) ions provokes membrane depolarization, initiating the propagation of electrical signals throughout cells and tissues. Nav1.5 is the predominant sodium channel expressed in myocardial cells and it is responsible for the initial upstroke of the action potential in cardiac myocytes, thereby initiating the heartbeat. Required for normal electrical conduction including formation of the infranodal ventricular conduction system and normal action potential configuration, as a result of its interaction with XIRP2. This chain is Sodium channel protein type 5 subunit alpha, found in Mus musculus (Mouse).